The primary structure comprises 796 residues: High affinity nerve growth factor receptor (796 aa).

The N-terminal stretch at 1–32 (MLRGGRRGQLGWHSWAAGPGSLLAWLILASAG) is a signal peptide. The Extracellular segment spans residues 33–423 (AAPCPDACCP…TPFGVSVAVG (391 aa)). 2 disulfide bridges follow: C36–C41 and C40–C50. N67, N95, N121, N188, N202, N253, N262, N281, N318, N323, N338, N358, and N401 each carry an N-linked (GlcNAc...) asparagine glycan. 2 LRR repeats span residues 90-113 (LGEL…AFHF) and 116-137 (RLSR…TVQG). Residues 148–193 (NPLHCSCALRWLQRWEEEGLGGVPEQKLQCHGQGPLAHMPNASCGV) enclose the LRRCT domain. A disulfide bond links C154 and C191. Ig-like C2-type domains lie at 194-283 (PTLK…VNVS) and 299-365 (WCIP…LAAN). A disulfide bridge links C215 with C265. The cysteines at positions 300 and 345 are disulfide-linked. The helical transmembrane segment at 424 to 439 (LAVFACLFLSTLLLVL) threads the bilayer. Residues 440 to 796 (NKCGRRNKFG…APPVYLDVLG (357 aa)) lie on the Cytoplasmic side of the membrane. The segment at 469–490 (MTLGGSSLSPTEGKGSGLQGHI) is interaction with SQSTM1. Y496 carries the post-translational modification Phosphotyrosine; by autocatalysis. A Protein kinase domain is found at 510-781 (IVLKWELGEG…HSIKDVHARL (272 aa)). Position 516 to 524 (516 to 524 (LGEGAFGKV)) interacts with ATP. The DXXLL motif lies at 537–541 (DKMLV). K544 contacts ATP. The DXXLL signature appears at 607 to 611 (DAKLL). D650 functions as the Proton acceptor in the catalytic mechanism. Residues Y676, Y680, Y681, and Y791 each carry the phosphotyrosine; by autocatalysis modification.

The protein belongs to the protein kinase superfamily. Tyr protein kinase family. Insulin receptor subfamily. As to quaternary structure, exists in a dynamic equilibrium between monomeric (low affinity) and dimeric (high affinity) structures. Homodimerization is induced by binding of a NGF dimer. Interacts with SQSTM1; bridges NTRK1 to NGFR. Forms a ternary complex with NGFR and KIDINS220; this complex is affected by the expression levels of KIDINS220 and an increase in KIDINS220 expression leads to a decreased association of NGFR and NTRK1. Interacts with SH2D1A; regulates NTRK1. Interacts (phosphorylated upon activation by NGF) with SHC1; mediates SHC1 phosphorylation and activation. Interacts (phosphorylated upon activation by NGF) with PLCG1; mediates PLCG1 phosphorylation and activation. Interacts (phosphorylated) with SH2B1 and SH2B2. Interacts with GRB2. Interacts with PIK3R1. Interacts with FRS2. Interacts with SORT1; may regulate NTRK1 anterograde axonal transport. Interacts with RAB7A. Found in a complex, at least composed of KIDINS220, MAGI2, NTRK1 and RAPGEF2; the complex is mainly formed at late endosomes in a nerve growth factor (NGF)-dependent manner. Interacts with RAPGEF2; the interaction is strengthened after NGF stimulation. Interacts with PTPRS. Interacts with USP36; USP36 does not deubiquitinate NTRK1. Interacts with GGA3. Interacts with TSPAN1; this interaction promotes NTRK1 stability. Post-translationally, ligand-mediated autophosphorylation. Interaction with SQSTM1 is phosphotyrosine-dependent. Autophosphorylation at Tyr-496 mediates interaction and phosphorylation of SHC1. N-glycosylated. Isoform TrkA-I and isoform TrkA-II are N-glycosylated. In terms of processing, ubiquitinated. Undergoes polyubiquitination upon activation; regulated by NGFR. Ubiquitination by NEDD4L leads to degradation. Ubiquitination regulates the internalization of the receptor. In terms of tissue distribution, isoform TrkA-I is found in most non-neuronal tissues. Isoform TrkA-II is primarily expressed in neuronal cells. TrkA-III is specifically expressed by pluripotent neural stem and neural crest progenitors.

It localises to the cell membrane. It is found in the early endosome membrane. The protein localises to the late endosome membrane. The protein resides in the recycling endosome membrane. It catalyses the reaction L-tyrosyl-[protein] + ATP = O-phospho-L-tyrosyl-[protein] + ADP + H(+). Its activity is regulated as follows. The pro-survival signaling effect of NTRK1 in neurons requires its endocytosis into signaling early endosomes and its retrograde axonal transport. This is regulated by different proteins including CFL1, RAC1 and SORT1. NTF3 is unable to induce this signaling probably due to the lability of the NTF3-NTRK1 complex in endosomes. SH2D1A inhibits the autophosphorylation of the receptor, and alters the recruitment and activation of downstream effectors and signaling cascades. Regulated by NGFR. Functionally, receptor tyrosine kinase involved in the development and the maturation of the central and peripheral nervous systems through regulation of proliferation, differentiation and survival of sympathetic and nervous neurons. High affinity receptor for NGF which is its primary ligand. Can also bind and be activated by NTF3/neurotrophin-3. However, NTF3 only supports axonal extension through NTRK1 but has no effect on neuron survival. Upon dimeric NGF ligand-binding, undergoes homodimerization, autophosphorylation and activation. Recruits, phosphorylates and/or activates several downstream effectors including SHC1, FRS2, SH2B1, SH2B2 and PLCG1 that regulate distinct overlapping signaling cascades driving cell survival and differentiation. Through SHC1 and FRS2 activates a GRB2-Ras-MAPK cascade that regulates cell differentiation and survival. Through PLCG1 controls NF-Kappa-B activation and the transcription of genes involved in cell survival. Through SHC1 and SH2B1 controls a Ras-PI3 kinase-AKT1 signaling cascade that is also regulating survival. In absence of ligand and activation, may promote cell death, making the survival of neurons dependent on trophic factors. In terms of biological role, resistant to NGF, it constitutively activates AKT1 and NF-kappa-B and is unable to activate the Ras-MAPK signaling cascade. Antagonizes the anti-proliferative NGF-NTRK1 signaling that promotes neuronal precursors differentiation. Isoform TrkA-III promotes angiogenesis and has oncogenic activity when overexpressed. The sequence is that of High affinity nerve growth factor receptor (NTRK1) from Homo sapiens (Human).